The primary structure comprises 743 residues: Threonine--tRNA ligase (743 aa).

Over residues 1-15 (MSADSPSSPASSQAA) the composition is skewed to low complexity. The tract at residues 1-30 (MSADSPSSPASSQAAEVQVRLPDGSLKTQP) is disordered. The TGS domain occupies 13 to 76 (QAAEVQVRLP…GEIADDENVV (64 aa)). The catalytic stretch occupies residues 264-619 (DHRVLGKQHG…LIEHFAGAFP (356 aa)). The segment at 354–404 (AWSTRLDKDDLSKDDEDKLIAAAEVFGVKLPDYKPSASNDAKKDVLHRWQL) is insert. The Zn(2+) site is built by Cys416, His467, and His596.

The protein belongs to the class-II aminoacyl-tRNA synthetase family. As to quaternary structure, homodimer. Zn(2+) is required as a cofactor.

Its subcellular location is the cytoplasm. The enzyme catalyses tRNA(Thr) + L-threonine + ATP = L-threonyl-tRNA(Thr) + AMP + diphosphate + H(+). Catalyzes the attachment of threonine to tRNA(Thr) in a two-step reaction: L-threonine is first activated by ATP to form Thr-AMP and then transferred to the acceptor end of tRNA(Thr). Also edits incorrectly charged L-seryl-tRNA(Thr). The protein is Threonine--tRNA ligase of Rhodopirellula baltica (strain DSM 10527 / NCIMB 13988 / SH1).